Consider the following 393-residue polypeptide: Probable tRNA sulfurtransferase (393 aa).

Residues 61–168 form the THUMP domain; it reads DEVIESLTRV…GDVINIYSIE (108 aa). Residues 186–187, 211–212, R268, G290, and Q299 contribute to the ATP site; these read LL and YF.

The protein belongs to the ThiI family.

Its subcellular location is the cytoplasm. It carries out the reaction [ThiI sulfur-carrier protein]-S-sulfanyl-L-cysteine + a uridine in tRNA + 2 reduced [2Fe-2S]-[ferredoxin] + ATP + H(+) = [ThiI sulfur-carrier protein]-L-cysteine + a 4-thiouridine in tRNA + 2 oxidized [2Fe-2S]-[ferredoxin] + AMP + diphosphate. The enzyme catalyses [ThiS sulfur-carrier protein]-C-terminal Gly-Gly-AMP + S-sulfanyl-L-cysteinyl-[cysteine desulfurase] + AH2 = [ThiS sulfur-carrier protein]-C-terminal-Gly-aminoethanethioate + L-cysteinyl-[cysteine desulfurase] + A + AMP + 2 H(+). Its pathway is cofactor biosynthesis; thiamine diphosphate biosynthesis. Catalyzes the ATP-dependent transfer of a sulfur to tRNA to produce 4-thiouridine in position 8 of tRNAs, which functions as a near-UV photosensor. Also catalyzes the transfer of sulfur to the sulfur carrier protein ThiS, forming ThiS-thiocarboxylate. This is a step in the synthesis of thiazole, in the thiamine biosynthesis pathway. The sulfur is donated as persulfide by IscS. The chain is Probable tRNA sulfurtransferase from Lachnospira eligens (strain ATCC 27750 / DSM 3376 / VPI C15-48 / C15-B4) (Eubacterium eligens).